A 329-amino-acid chain; its full sequence is Lipoyl synthase (329 aa).

Residues methionine 1–lysine 23 form a disordered region. [4Fe-4S] cluster-binding residues include cysteine 76, cysteine 81, cysteine 87, cysteine 102, cysteine 106, cysteine 109, and serine 316. The Radical SAM core domain maps to cysteine 87–threonine 305.

Belongs to the radical SAM superfamily. Lipoyl synthase family. Requires [4Fe-4S] cluster as cofactor.

It is found in the cytoplasm. The enzyme catalyses [[Fe-S] cluster scaffold protein carrying a second [4Fe-4S](2+) cluster] + N(6)-octanoyl-L-lysyl-[protein] + 2 oxidized [2Fe-2S]-[ferredoxin] + 2 S-adenosyl-L-methionine + 4 H(+) = [[Fe-S] cluster scaffold protein] + N(6)-[(R)-dihydrolipoyl]-L-lysyl-[protein] + 4 Fe(3+) + 2 hydrogen sulfide + 2 5'-deoxyadenosine + 2 L-methionine + 2 reduced [2Fe-2S]-[ferredoxin]. It functions in the pathway protein modification; protein lipoylation via endogenous pathway; protein N(6)-(lipoyl)lysine from octanoyl-[acyl-carrier-protein]: step 2/2. In terms of biological role, catalyzes the radical-mediated insertion of two sulfur atoms into the C-6 and C-8 positions of the octanoyl moiety bound to the lipoyl domains of lipoate-dependent enzymes, thereby converting the octanoylated domains into lipoylated derivatives. The polypeptide is Lipoyl synthase (Burkholderia mallei (strain NCTC 10247)).